The following is a 592-amino-acid chain: Aspartate--tRNA(Asp/Asn) ligase (592 aa).

Glu-175 serves as a coordination point for L-aspartate. Residues 199 to 202 form an aspartate region; the sequence is QLFK. Residue Arg-221 participates in L-aspartate binding. ATP is bound by residues 221–223 and Gln-230; that span reads RDE. His-450 is an L-aspartate binding site. Residue Glu-483 coordinates ATP. Residue Arg-490 coordinates L-aspartate. ATP is bound at residue 535–538; that stretch reads GLDR.

The protein belongs to the class-II aminoacyl-tRNA synthetase family. Type 1 subfamily. As to quaternary structure, homodimer.

Its subcellular location is the cytoplasm. It catalyses the reaction tRNA(Asx) + L-aspartate + ATP = L-aspartyl-tRNA(Asx) + AMP + diphosphate. Its function is as follows. Aspartyl-tRNA synthetase with relaxed tRNA specificity since it is able to aspartylate not only its cognate tRNA(Asp) but also tRNA(Asn). Reaction proceeds in two steps: L-aspartate is first activated by ATP to form Asp-AMP and then transferred to the acceptor end of tRNA(Asp/Asn). This Acinetobacter baumannii (strain ATCC 17978 / DSM 105126 / CIP 53.77 / LMG 1025 / NCDC KC755 / 5377) protein is Aspartate--tRNA(Asp/Asn) ligase.